Consider the following 212-residue polypeptide: ATP phosphoribosyltransferase (212 aa).

Belongs to the ATP phosphoribosyltransferase family. Short subfamily. As to quaternary structure, heteromultimer composed of HisG and HisZ subunits.

The protein localises to the cytoplasm. It carries out the reaction 1-(5-phospho-beta-D-ribosyl)-ATP + diphosphate = 5-phospho-alpha-D-ribose 1-diphosphate + ATP. Its pathway is amino-acid biosynthesis; L-histidine biosynthesis; L-histidine from 5-phospho-alpha-D-ribose 1-diphosphate: step 1/9. Catalyzes the condensation of ATP and 5-phosphoribose 1-diphosphate to form N'-(5'-phosphoribosyl)-ATP (PR-ATP). Has a crucial role in the pathway because the rate of histidine biosynthesis seems to be controlled primarily by regulation of HisG enzymatic activity. This is ATP phosphoribosyltransferase from Clostridium botulinum (strain ATCC 19397 / Type A).